A 45-amino-acid chain; its full sequence is Large ribosomal subunit protein bL34 (45 aa).

The segment covering 1-10 (MTQRTLGGTN) has biased composition (polar residues). The tract at residues 1–45 (MTQRTLGGTNRKQKRTSGFRARMRTHNGRKVIQARRSKGRHRLAV) is disordered. Residues 11 to 45 (RKQKRTSGFRARMRTHNGRKVIQARRSKGRHRLAV) are compositionally biased toward basic residues.

Belongs to the bacterial ribosomal protein bL34 family.

The polypeptide is Large ribosomal subunit protein bL34 (rpmH) (Synechocystis sp. (strain ATCC 27184 / PCC 6803 / Kazusa)).